Reading from the N-terminus, the 157-residue chain is Ribonuclease (157 aa).

The first 34 residues, 1 to 34 (MMKMEGIALKKRLSWISVCLLVLVSAAGMLFSTA), serve as a signal peptide directing secretion. The propeptide occupies 35–47 (AKTETSSHKAHTE). Glutamate 120 functions as the Proton acceptor in the catalytic mechanism. Histidine 149 acts as the Proton donor in catalysis.

Belongs to the ribonuclease N1/T1 family.

Its subcellular location is the secreted. Functionally, hydrolyzes phosphodiester bonds in RNA, poly- and oligoribonucleotides resulting in 3'-nucleoside monophosphates via 2',3'-cyclophosphate intermediates. This chain is Ribonuclease, found in Bacillus amyloliquefaciens (Bacillus velezensis).